Consider the following 325-residue polypeptide: Eukaryotic translation initiation factor 3 subunit I (325 aa).

5 WD repeats span residues 1-39 (MKPI…VWYS), 43-81 (ERLG…LWDC), 87-127 (LALL…FFDL), 135-175 (NNEP…QYSA), and 180-217 (VLVN…LFDS). At T219 the chain carries Phosphothreonine. 2 WD repeats span residues 221–267 (EHQK…KFEA) and 275–316 (EEEF…YFDP). Position 264 is an N6-acetyllysine (K264). A Glycyl lysine isopeptide (Lys-Gly) (interchain with G-Cter in ubiquitin) cross-link involves residue K282. Position 308 is a phosphotyrosine (Y308).

Component of the eukaryotic translation initiation factor 3 (eIF-3) complex, which is composed of 13 subunits: EIF3A, EIF3B, EIF3C, EIF3D, EIF3E, EIF3F, EIF3G, EIF3H, EIF3I, EIF3J, EIF3K, EIF3L and EIF3M. The eIF-3 complex appears to include 3 stable modules: module A is composed of EIF3A, EIF3B, EIF3G and EIF3I; module B is composed of EIF3F, EIF3H, and EIF3M; and module C is composed of EIF3C, EIF3D, EIF3E, EIF3K and EIF3L. EIF3C of module C binds EIF3B of module A and EIF3H of module B, thereby linking the three modules. EIF3J is a labile subunit that binds to the eIF-3 complex via EIF3B. The eIF-3 complex interacts with RPS6KB1 under conditions of nutrient depletion. Mitogenic stimulation leads to binding and activation of a complex composed of MTOR and RPTOR, leading to phosphorylation and release of RPS6KB1 and binding of EIF4B to eIF-3. Phosphorylated by TGF-beta type II receptor.

Its subcellular location is the cytoplasm. Component of the eukaryotic translation initiation factor 3 (eIF-3) complex, which is required for several steps in the initiation of protein synthesis. The eIF-3 complex associates with the 40S ribosome and facilitates the recruitment of eIF-1, eIF-1A, eIF-2:GTP:methionyl-tRNAi and eIF-5 to form the 43S pre-initiation complex (43S PIC). The eIF-3 complex stimulates mRNA recruitment to the 43S PIC and scanning of the mRNA for AUG recognition. The eIF-3 complex is also required for disassembly and recycling of post-termination ribosomal complexes and subsequently prevents premature joining of the 40S and 60S ribosomal subunits prior to initiation. The eIF-3 complex specifically targets and initiates translation of a subset of mRNAs involved in cell proliferation, including cell cycling, differentiation and apoptosis, and uses different modes of RNA stem-loop binding to exert either translational activation or repression. In Homo sapiens (Human), this protein is Eukaryotic translation initiation factor 3 subunit I.